Here is an 859-residue protein sequence, read N- to C-terminus: Protein EFR3 homolog (859 aa).

Disordered stretches follow at residues 638–657 and 697–724; these read DDPL…TPRT and RDGN…PDGY. The span at 704 to 722 shows a compositional bias: basic and acidic residues; it reads WQREDGQNFDSTDGRESPD.

The protein belongs to the EFR3 family.

This Caenorhabditis briggsae protein is Protein EFR3 homolog.